The sequence spans 122 residues: Large ribosomal subunit protein uL14 (122 aa).

Belongs to the universal ribosomal protein uL14 family. As to quaternary structure, part of the 50S ribosomal subunit. Forms a cluster with proteins L3 and L19. In the 70S ribosome, L14 and L19 interact and together make contacts with the 16S rRNA in bridges B5 and B8.

In terms of biological role, binds to 23S rRNA. Forms part of two intersubunit bridges in the 70S ribosome. In Chlamydia abortus (strain DSM 27085 / S26/3) (Chlamydophila abortus), this protein is Large ribosomal subunit protein uL14.